A 538-amino-acid polypeptide reads, in one-letter code: Bifunctional purine biosynthesis protein PurH (538 aa).

Positions isoleucine 8–threonine 158 constitute an MGS-like domain.

Belongs to the PurH family.

The catalysed reaction is (6R)-10-formyltetrahydrofolate + 5-amino-1-(5-phospho-beta-D-ribosyl)imidazole-4-carboxamide = 5-formamido-1-(5-phospho-D-ribosyl)imidazole-4-carboxamide + (6S)-5,6,7,8-tetrahydrofolate. It catalyses the reaction IMP + H2O = 5-formamido-1-(5-phospho-D-ribosyl)imidazole-4-carboxamide. The protein operates within purine metabolism; IMP biosynthesis via de novo pathway; 5-formamido-1-(5-phospho-D-ribosyl)imidazole-4-carboxamide from 5-amino-1-(5-phospho-D-ribosyl)imidazole-4-carboxamide (10-formyl THF route): step 1/1. It functions in the pathway purine metabolism; IMP biosynthesis via de novo pathway; IMP from 5-formamido-1-(5-phospho-D-ribosyl)imidazole-4-carboxamide: step 1/1. This chain is Bifunctional purine biosynthesis protein PurH, found in Rhizobium rhizogenes (strain K84 / ATCC BAA-868) (Agrobacterium radiobacter).